A 352-amino-acid polypeptide reads, in one-letter code: Protein-glutamate methylesterase/protein-glutamine glutaminase 2 (352 aa).

One can recognise a Response regulatory domain in the interval 6-124; it reads KVLIVEDSLV…NAGYDTMAAK (119 aa). At Asp57 the chain carries 4-aspartylphosphate. The CheB-type methylesterase domain occupies 162 to 343; sequence PGTYSMVGIV…LPLPAIAARL (182 aa). Residues Ser173, His200, and Asp292 contribute to the active site.

Belongs to the CheB family. In terms of processing, phosphorylated by CheA. Phosphorylation of the N-terminal regulatory domain activates the methylesterase activity.

It is found in the cytoplasm. It catalyses the reaction [protein]-L-glutamate 5-O-methyl ester + H2O = L-glutamyl-[protein] + methanol + H(+). The catalysed reaction is L-glutaminyl-[protein] + H2O = L-glutamyl-[protein] + NH4(+). Functionally, involved in chemotaxis. Part of a chemotaxis signal transduction system that modulates chemotaxis in response to various stimuli. Catalyzes the demethylation of specific methylglutamate residues introduced into the chemoreceptors (methyl-accepting chemotaxis proteins or MCP) by CheR. Also mediates the irreversible deamidation of specific glutamine residues to glutamic acid. In Paramagnetospirillum magneticum (strain ATCC 700264 / AMB-1) (Magnetospirillum magneticum), this protein is Protein-glutamate methylesterase/protein-glutamine glutaminase 2.